Consider the following 291-residue polypeptide: N-acetylmannosamine kinase (291 aa).

ATP is bound by residues 5–12 (AIDIGGTK) and 132–139 (GVGGGVVC). Residues His-156, Cys-166, Cys-168, and Cys-173 each coordinate Zn(2+).

Belongs to the ROK (NagC/XylR) family. NanK subfamily. As to quaternary structure, homodimer.

The enzyme catalyses an N-acyl-D-mannosamine + ATP = an N-acyl-D-mannosamine 6-phosphate + ADP + H(+). It participates in amino-sugar metabolism; N-acetylneuraminate degradation; D-fructose 6-phosphate from N-acetylneuraminate: step 2/5. In terms of biological role, catalyzes the phosphorylation of N-acetylmannosamine (ManNAc) to ManNAc-6-P. The protein is N-acetylmannosamine kinase of Salmonella arizonae (strain ATCC BAA-731 / CDC346-86 / RSK2980).